The chain runs to 31 residues: Ranatuerin-2 (31 aa).

A disulfide bond links cysteine 23 and cysteine 28.

The protein belongs to the frog skin active peptide (FSAP) family. Ranatuerin subfamily. As to expression, expressed by the skin glands.

It localises to the secreted. Its function is as follows. Antibacterial activity against Gram-positive bacterium S.aureus (MIC=60 uM). Shows no detectable hemolytic activity towards human erythrocytes. The polypeptide is Ranatuerin-2 (Aquarana catesbeiana (American bullfrog)).